Here is a 529-residue protein sequence, read N- to C-terminus: UPF0159 protein TC_0921 (529 aa).

2 ThyX domains span residues 38 to 274 (KGAL…AEPH) and 309 to 511 (KGVK…LKFV).

It belongs to the UPF0159 family.

The chain is UPF0159 protein TC_0921 from Chlamydia muridarum (strain MoPn / Nigg).